We begin with the raw amino-acid sequence, 272 residues long: Indole-3-glycerol phosphate synthase (272 aa).

The protein belongs to the TrpC family.

It carries out the reaction 1-(2-carboxyphenylamino)-1-deoxy-D-ribulose 5-phosphate + H(+) = (1S,2R)-1-C-(indol-3-yl)glycerol 3-phosphate + CO2 + H2O. Its pathway is amino-acid biosynthesis; L-tryptophan biosynthesis; L-tryptophan from chorismate: step 4/5. This Mycobacterium leprae (strain Br4923) protein is Indole-3-glycerol phosphate synthase.